Consider the following 167-residue polypeptide: Dual specificity protein phosphatase 1B (167 aa).

In terms of domain architecture, Tyrosine-protein phosphatase spans 24–165 (DLSEIQQGLF…LQQFEKSIQG (142 aa)). Residue Cys-109 is the Phosphocysteine intermediate of the active site.

This sequence belongs to the protein-tyrosine phosphatase family. Non-receptor class dual specificity subfamily. Associates with MPK3 and MPK6. Interacts with MPK6 is promoted during HR-like responses triggered by fungal elicitors, whereas interaction with MPK3 in repressed. As to expression, expressed in flowers, seedlings, roots, leaves, and seeds. Present in stomata and meristematic cells.

It is found in the nucleus. It localises to the cytoplasm. It carries out the reaction O-phospho-L-tyrosyl-[protein] + H2O = L-tyrosyl-[protein] + phosphate. The catalysed reaction is O-phospho-L-seryl-[protein] + H2O = L-seryl-[protein] + phosphate. It catalyses the reaction O-phospho-L-threonyl-[protein] + H2O = L-threonyl-[protein] + phosphate. Its function is as follows. Has a dual specificity toward Ser/Thr and Tyr-containing proteins. Prevents biotic and abiotic stress responses, including ozone, oxidative stress and pathogen attacks; represses MAPK activities during hypersensitive response to limit the spread of the HR response after infection by necrotrophic pathogen such as Botrytis cinerea. May be also involved in ABA and salt responses. Dephosphorylates MPK3 and MPK6. The chain is Dual specificity protein phosphatase 1B (DSPTP1B) from Arabidopsis thaliana (Mouse-ear cress).